Consider the following 332-residue polypeptide: Lipoyl synthase (332 aa).

Residues cysteine 74, cysteine 79, cysteine 85, cysteine 100, cysteine 104, cysteine 107, and serine 314 each coordinate [4Fe-4S] cluster. The Radical SAM core domain occupies 85 to 303; that stretch reads CFGKGTATFM…EEKAYEMGFS (219 aa).

This sequence belongs to the radical SAM superfamily. Lipoyl synthase family. [4Fe-4S] cluster is required as a cofactor.

It localises to the cytoplasm. The enzyme catalyses [[Fe-S] cluster scaffold protein carrying a second [4Fe-4S](2+) cluster] + N(6)-octanoyl-L-lysyl-[protein] + 2 oxidized [2Fe-2S]-[ferredoxin] + 2 S-adenosyl-L-methionine + 4 H(+) = [[Fe-S] cluster scaffold protein] + N(6)-[(R)-dihydrolipoyl]-L-lysyl-[protein] + 4 Fe(3+) + 2 hydrogen sulfide + 2 5'-deoxyadenosine + 2 L-methionine + 2 reduced [2Fe-2S]-[ferredoxin]. Its pathway is protein modification; protein lipoylation via endogenous pathway; protein N(6)-(lipoyl)lysine from octanoyl-[acyl-carrier-protein]: step 2/2. In terms of biological role, catalyzes the radical-mediated insertion of two sulfur atoms into the C-6 and C-8 positions of the octanoyl moiety bound to the lipoyl domains of lipoate-dependent enzymes, thereby converting the octanoylated domains into lipoylated derivatives. The polypeptide is Lipoyl synthase (Polaromonas naphthalenivorans (strain CJ2)).